The primary structure comprises 644 residues: Exoribonuclease 2 (644 aa).

An RNB domain is found at 189–516 (REDLTALNFV…NHRLLKAMIT (328 aa)). In terms of domain architecture, S1 motif spans 561–643 (DTRFTAEIID…ETRNVIARPV (83 aa)).

It belongs to the RNR ribonuclease family. RNase II subfamily.

It localises to the cytoplasm. It carries out the reaction Exonucleolytic cleavage in the 3'- to 5'-direction to yield nucleoside 5'-phosphates.. Its function is as follows. Involved in mRNA degradation. Hydrolyzes single-stranded polyribonucleotides processively in the 3' to 5' direction. The protein is Exoribonuclease 2 of Yersinia pestis bv. Antiqua (strain Antiqua).